The chain runs to 335 residues: Zinc-type alcohol dehydrogenase-like protein SAR2277 (335 aa).

The protein belongs to the zinc-containing alcohol dehydrogenase family. Quinone oxidoreductase subfamily.

The polypeptide is Zinc-type alcohol dehydrogenase-like protein SAR2277 (Staphylococcus aureus (strain MRSA252)).